Consider the following 127-residue polypeptide: MORF4 family-associated protein 1 (127 aa).

The stretch at 92 to 126 (RAAKRCEKAEEKAKEIAKMAEMLVELVRRIEKSES) forms a coiled coil.

It belongs to the MORF4 family-associated protein family. In terms of assembly, found in a complex composed of MORF4L1, MRFAP1 and RB1. Interacts via its N-terminus with MORF4L1. Interacts with CSTB and MORF4L2.

It localises to the nucleus. The protein localises to the cytoplasm. It is found in the perinuclear region. This chain is MORF4 family-associated protein 1, found in Homo sapiens (Human).